A 506-amino-acid chain; its full sequence is Maturase K (506 aa).

Belongs to the intron maturase 2 family. MatK subfamily.

It is found in the plastid. It localises to the chloroplast. Usually encoded in the trnK tRNA gene intron. Probably assists in splicing its own and other chloroplast group II introns. This Trifolium repens (Creeping white clover) protein is Maturase K.